The following is a 548-amino-acid chain: Membrane-associated tyrosine- and threonine-specific cdc2-inhibitory kinase (548 aa).

The disordered stretch occupies residues 61-89 (PNKQRSWSQPRPQSVSFRSPQNKTPASKL). Polar residues predominate over residues 63–85 (KQRSWSQPRPQSVSFRSPQNKTP). The 251-residue stretch at 103–353 (FKSICKLGRG…VDWLLSLPAI (251 aa)) folds into the Protein kinase domain. Residues 109-117 (LGRGSFGEV) and Lys132 each bind ATP. Asp226 (proton acceptor) is an active-site residue. Mg(2+) contacts are provided by Asn231, Asp244, and Gly246. The Membrane-association motif motif lies at 376 to 392 (VYQFIVWLLSFVFQWLN). The interval 464-523 (SPDLLSRPSLGSTSTPRNLSPEFSMRKRSALPLTPNVSRISQDSTGKSRSPSTSHSSSGF) is disordered. Over residues 472-481 (SLGSTSTPRN) the composition is skewed to polar residues. Thr478 carries the post-translational modification Phosphothreonine; by CDK1. The segment covering 507–521 (STGKSRSPSTSHSSS) has biased composition (low complexity).

It belongs to the protein kinase superfamily. Ser/Thr protein kinase family. WEE1 subfamily. In terms of assembly, interacts with CDC2-CCNB1 complex. Interacts with Mos during oocyte maturation. Autophosphorylated. Phosphorylated on undefined residues by RSK2 and Mos kinases. Phosphorylation at Thr-478 by cdk1 creates a docking site for plk1/plx1, leading to subsequent phosphorylation by plk1/plk1 and inhibition of the protein kinase activity kinase activity.

Its subcellular location is the endoplasmic reticulum membrane. The protein localises to the golgi apparatus membrane. The catalysed reaction is L-seryl-[protein] + ATP = O-phospho-L-seryl-[protein] + ADP + H(+). It catalyses the reaction L-threonyl-[protein] + ATP = O-phospho-L-threonyl-[protein] + ADP + H(+). Negatively regulated by hyperphosphorylation during mitosis. The plk1/plk1 protein kinase may be required for mitotic phosphorylation. Inactivated during oocyte maturation by phosphorylation by RSK2 and Mos kinase. In terms of biological role, acts as a negative regulator of entry into mitosis (G2 to M transition) by phosphorylation of the CDK1 kinase specifically when CDK1 is complexed to cyclins. Mediates phosphorylation of CDK1 predominantly on 'Thr-14'. Also involved in Golgi fragmentation. May be involved in phosphorylation of CDK1 on 'Tyr-15' to a lesser degree, however tyrosine kinase activity is unclear and may be indirect. The protein is Membrane-associated tyrosine- and threonine-specific cdc2-inhibitory kinase (pkmyt1) of Xenopus laevis (African clawed frog).